A 140-amino-acid polypeptide reads, in one-letter code: Cystatin-C (140 aa).

An N-terminal signal peptide occupies residues 1–20; the sequence is MASPLRSLLFLLAVLAVAWA. Positions 75–79 match the Secondary area of contact motif; that stretch reads QLVAG. 2 disulfides stabilise this stretch: C93/C103 and C117/C137.

Belongs to the cystatin family.

It localises to the secreted. As an inhibitor of cysteine proteinases, this protein is thought to serve an important physiological role as a local regulator of this enzyme activity. The protein is Cystatin-C (Cst3) of Mus musculus (Mouse).